The following is a 66-amino-acid chain: Phylloseptin-H8 (66 aa).

An N-terminal signal peptide occupies residues 1 to 22; the sequence is MAFLKKSLFLVLFLGLVSLSIC. Residues 23–44 constitute a propeptide that is removed on maturation; that stretch reads EEEKRETEEEENDQEEDDKSEE. The interval 25-44 is disordered; that stretch reads EKRETEEEENDQEEDDKSEE. Acidic residues predominate over residues 30–41; the sequence is EEEENDQEEDDK. The residue at position 65 (Leu65) is a Leucine amide.

Expressed by the skin glands.

The protein localises to the secreted. Its function is as follows. Has antimicrobial activity. This is Phylloseptin-H8 from Pithecopus hypochondrialis (Orange-legged leaf frog).